Consider the following 356-residue polypeptide: D-alanine--D-alanine ligase (356 aa).

Residues 134–339 (KQLFEHRGLP…YSDLITKLID (206 aa)) form the ATP-grasp domain. Position 167 to 222 (167 to 222 (KDKLTYPVFVKPANLGSSVGISKCNNEDELKSGIEEAFQFDRKLVIEQGINAREVE)) interacts with ATP. Residues aspartate 293, glutamate 306, and asparagine 308 each coordinate Mg(2+).

It belongs to the D-alanine--D-alanine ligase family. Requires Mg(2+) as cofactor. Mn(2+) is required as a cofactor.

The protein localises to the cytoplasm. It catalyses the reaction 2 D-alanine + ATP = D-alanyl-D-alanine + ADP + phosphate + H(+). The protein operates within cell wall biogenesis; peptidoglycan biosynthesis. In terms of biological role, cell wall formation. The polypeptide is D-alanine--D-alanine ligase (Staphylococcus haemolyticus (strain JCSC1435)).